We begin with the raw amino-acid sequence, 165 residues long: Adenine phosphoribosyltransferase (165 aa).

This sequence belongs to the purine/pyrimidine phosphoribosyltransferase family. As to quaternary structure, homodimer.

The protein resides in the cytoplasm. It carries out the reaction AMP + diphosphate = 5-phospho-alpha-D-ribose 1-diphosphate + adenine. It participates in purine metabolism; AMP biosynthesis via salvage pathway; AMP from adenine: step 1/1. Catalyzes a salvage reaction resulting in the formation of AMP, that is energically less costly than de novo synthesis. The polypeptide is Adenine phosphoribosyltransferase (Bdellovibrio bacteriovorus (strain ATCC 15356 / DSM 50701 / NCIMB 9529 / HD100)).